A 77-amino-acid chain; its full sequence is Putative defensin-like protein 30 (77 aa).

An N-terminal signal peptide occupies residues Met1 to Ala26. Cystine bridges form between Cys43-Cys63, Cys49-Cys72, and Cys53-Cys74.

It belongs to the DEFL family.

The protein localises to the secreted. In Arabidopsis thaliana (Mouse-ear cress), this protein is Putative defensin-like protein 30.